Here is a 335-residue protein sequence, read N- to C-terminus: uncharacterized protein (335 aa).

It belongs to the glycosyltransferase group 1 family. Glycosyltransferase 4 subfamily.

This is an uncharacterized protein from Sulfolobus islandicus rod-shaped virus 1 (SIRV-1).